Here is a 323-residue protein sequence, read N- to C-terminus: tRNA dimethylallyltransferase (323 aa).

12–19 provides a ligand contact to ATP; that stretch reads GPTAAGKT. A substrate-binding site is contributed by 14 to 19; it reads TAAGKT. 2 interaction with substrate tRNA regions span residues 37–40 and 161–165; these read DSAL and QRLIR.

This sequence belongs to the IPP transferase family. In terms of assembly, monomer. It depends on Mg(2+) as a cofactor.

The catalysed reaction is adenosine(37) in tRNA + dimethylallyl diphosphate = N(6)-dimethylallyladenosine(37) in tRNA + diphosphate. Catalyzes the transfer of a dimethylallyl group onto the adenine at position 37 in tRNAs that read codons beginning with uridine, leading to the formation of N6-(dimethylallyl)adenosine (i(6)A). The protein is tRNA dimethylallyltransferase of Pseudomonas entomophila (strain L48).